Here is a 347-residue protein sequence, read N- to C-terminus: UDP-3-O-acylglucosamine N-acyltransferase (347 aa).

Residue H241 is the Proton acceptor of the active site.

It belongs to the transferase hexapeptide repeat family. LpxD subfamily. Homotrimer.

The catalysed reaction is a UDP-3-O-[(3R)-3-hydroxyacyl]-alpha-D-glucosamine + a (3R)-hydroxyacyl-[ACP] = a UDP-2-N,3-O-bis[(3R)-3-hydroxyacyl]-alpha-D-glucosamine + holo-[ACP] + H(+). It participates in bacterial outer membrane biogenesis; LPS lipid A biosynthesis. Its function is as follows. Catalyzes the N-acylation of UDP-3-O-acylglucosamine using 3-hydroxyacyl-ACP as the acyl donor. Is involved in the biosynthesis of lipid A, a phosphorylated glycolipid that anchors the lipopolysaccharide to the outer membrane of the cell. The polypeptide is UDP-3-O-acylglucosamine N-acyltransferase (Nitrosococcus oceani (strain ATCC 19707 / BCRC 17464 / JCM 30415 / NCIMB 11848 / C-107)).